The following is a 158-amino-acid chain: Urease accessory protein UreE (158 aa).

The protein belongs to the UreE family.

The protein resides in the cytoplasm. Its function is as follows. Involved in urease metallocenter assembly. Binds nickel. Probably functions as a nickel donor during metallocenter assembly. The chain is Urease accessory protein UreE from Klebsiella pneumoniae (strain 342).